The chain runs to 245 residues: 1-(5-phosphoribosyl)-5-[(5-phosphoribosylamino)methylideneamino] imidazole-4-carboxamide isomerase (245 aa).

The Proton acceptor role is filled by aspartate 7. Catalysis depends on aspartate 129, which acts as the Proton donor.

Belongs to the HisA/HisF family.

The protein resides in the cytoplasm. The catalysed reaction is 1-(5-phospho-beta-D-ribosyl)-5-[(5-phospho-beta-D-ribosylamino)methylideneamino]imidazole-4-carboxamide = 5-[(5-phospho-1-deoxy-D-ribulos-1-ylimino)methylamino]-1-(5-phospho-beta-D-ribosyl)imidazole-4-carboxamide. It participates in amino-acid biosynthesis; L-histidine biosynthesis; L-histidine from 5-phospho-alpha-D-ribose 1-diphosphate: step 4/9. The protein is 1-(5-phosphoribosyl)-5-[(5-phosphoribosylamino)methylideneamino] imidazole-4-carboxamide isomerase of Salmonella heidelberg (strain SL476).